Reading from the N-terminus, the 368-residue chain is DNA replication and repair protein RecF (368 aa).

Residue G30–T37 coordinates ATP.

It belongs to the RecF family.

Its subcellular location is the cytoplasm. The RecF protein is involved in DNA metabolism; it is required for DNA replication and normal SOS inducibility. RecF binds preferentially to single-stranded, linear DNA. It also seems to bind ATP. This Chlorobaculum parvum (strain DSM 263 / NCIMB 8327) (Chlorobium vibrioforme subsp. thiosulfatophilum) protein is DNA replication and repair protein RecF.